Consider the following 578-residue polypeptide: Leucine-rich repeat-containing protein 15 (578 aa).

Positions 1–21 are cleaved as a signal peptide; the sequence is MPLKHYLLLLVGCQAWALGLA. Residues 22-53 enclose the LRRNT domain; sequence YYGCPSECTCSRASQVECTGARIVAMPTPLPW. Residues 22–535 lie on the Extracellular side of the membrane; it reads YYGCPSECTC…TWGMTEAQSG (514 aa). 15 LRR repeats span residues 54–75, 78–99, 102–123, 126–147, 150–171, 174–195, 198–219, 222–243, 246–267, 270–291, 294–315, 318–339, 342–363, 366–387, and 390–411; these read NAMS…LFLN, ALIA…AFRN, SLRY…VFQD, NLES…QFSQ, NLRE…AFDH, GLTK…LFQH, NLQV…TFDA, NLQE…LFHN, NLQR…IFMQ, QLNK…VFGP, NLRE…TFSH, QLQV…AFNG, NLRE…VFRS, NLQN…IFAN, and GLTT…IFDH. N-linked (GlcNAc...) asparagine glycosylation occurs at asparagine 75. Asparagine 369 is a glycosylation site (N-linked (GlcNAc...) asparagine). The region spanning 423 to 473 is the LRRCT domain; that stretch reads NPWRCDSDILPLHNWLLLNRARLGTDTLPVCSSPANVRGQSLVIININFPG. The tract at residues 476–500 is disordered; the sequence is VQGPETPEVPSYPDTPSYPDTTSVS. A helical membrane pass occupies residues 536–556; the sequence is LAIAAIVIGIIALACSLAACI. The Cytoplasmic portion of the chain corresponds to 557–578; that stretch reads CCCCCKKRSQAVLMQMKAPNEC.

It localises to the cell membrane. The sequence is that of Leucine-rich repeat-containing protein 15 (Lrrc15) from Rattus norvegicus (Rat).